We begin with the raw amino-acid sequence, 146 residues long: Deoxyuridine 5'-triphosphate nucleotidohydrolase (146 aa).

Substrate-binding positions include 65–67 (RSG), Asn78, and 82–84 (TID).

This sequence belongs to the dUTPase family. Mg(2+) serves as cofactor.

The catalysed reaction is dUTP + H2O = dUMP + diphosphate + H(+). The protein operates within pyrimidine metabolism; dUMP biosynthesis; dUMP from dCTP (dUTP route): step 2/2. Its function is as follows. This enzyme is involved in nucleotide metabolism: it produces dUMP, the immediate precursor of thymidine nucleotides and it decreases the intracellular concentration of dUTP so that uracil cannot be incorporated into DNA. The protein is Deoxyuridine 5'-triphosphate nucleotidohydrolase of Treponema pallidum subsp. pallidum (strain SS14).